Reading from the N-terminus, the 211-residue chain is Thymidylate kinase (211 aa).

7-14 (GCEGSGKS) lines the ATP pocket.

It belongs to the thymidylate kinase family.

The catalysed reaction is dTMP + ATP = dTDP + ADP. Phosphorylation of dTMP to form dTDP in both de novo and salvage pathways of dTTP synthesis. This is Thymidylate kinase from Chlamydia abortus (strain DSM 27085 / S26/3) (Chlamydophila abortus).